The chain runs to 211 residues: GTP-binding protein ypt5 (211 aa).

Residue 21–28 (GDSAVGKS) participates in GTP binding. The Effector region motif lies at 43–51 (RESTIGAAF). GTP-binding positions include 70–74 (DTAGQ) and 128–131 (NKLD). 2 S-geranylgeranyl cysteine lipidation sites follow: cysteine 209 and cysteine 211. Cysteine 211 is subject to Cysteine methyl ester.

The protein belongs to the small GTPase superfamily. Rab family.

Its subcellular location is the cell membrane. Functionally, protein transport. Probably involved in vesicular traffic. This chain is GTP-binding protein ypt5 (ypt5), found in Schizosaccharomyces pombe (strain 972 / ATCC 24843) (Fission yeast).